Here is a 129-residue protein sequence, read N- to C-terminus: Phosphoribosyl-AMP cyclohydrolase (129 aa).

Residue Asp-76 coordinates Mg(2+). Cys-77 lines the Zn(2+) pocket. Mg(2+) is bound by residues Asp-78 and Asp-80. Positions 97 and 104 each coordinate Zn(2+).

Belongs to the PRA-CH family. Homodimer. Requires Mg(2+) as cofactor. The cofactor is Zn(2+).

It localises to the cytoplasm. It carries out the reaction 1-(5-phospho-beta-D-ribosyl)-5'-AMP + H2O = 1-(5-phospho-beta-D-ribosyl)-5-[(5-phospho-beta-D-ribosylamino)methylideneamino]imidazole-4-carboxamide. It functions in the pathway amino-acid biosynthesis; L-histidine biosynthesis; L-histidine from 5-phospho-alpha-D-ribose 1-diphosphate: step 3/9. In terms of biological role, catalyzes the hydrolysis of the adenine ring of phosphoribosyl-AMP. The protein is Phosphoribosyl-AMP cyclohydrolase of Polaromonas sp. (strain JS666 / ATCC BAA-500).